We begin with the raw amino-acid sequence, 605 residues long: Elongation factor 4 (605 aa).

A tr-type G domain is found at 4-186 (SATRNFCIIA…AIVARVPAPK (183 aa)). GTP contacts are provided by residues 16-21 (DHGKST) and 133-136 (NKID).

This sequence belongs to the TRAFAC class translation factor GTPase superfamily. Classic translation factor GTPase family. LepA subfamily.

It localises to the cell membrane. The catalysed reaction is GTP + H2O = GDP + phosphate + H(+). In terms of biological role, required for accurate and efficient protein synthesis under certain stress conditions. May act as a fidelity factor of the translation reaction, by catalyzing a one-codon backward translocation of tRNAs on improperly translocated ribosomes. Back-translocation proceeds from a post-translocation (POST) complex to a pre-translocation (PRE) complex, thus giving elongation factor G a second chance to translocate the tRNAs correctly. Binds to ribosomes in a GTP-dependent manner. This Dehalococcoides mccartyi (strain ATCC BAA-2266 / KCTC 15142 / 195) (Dehalococcoides ethenogenes (strain 195)) protein is Elongation factor 4.